Reading from the N-terminus, the 374-residue chain is tRNA-specific 2-thiouridylase MnmA (374 aa).

Residues 15 to 22 and Met41 contribute to the ATP site; that span reads GMSGGVDS. The interval 101 to 103 is interaction with target base in tRNA; it reads NPD. The Nucleophile role is filled by Cys106. A disulfide bridge links Cys106 with Cys203. Position 130 (Gly130) interacts with ATP. The segment at 153 to 155 is interaction with tRNA; the sequence is KDQ. Catalysis depends on Cys203, which acts as the Cysteine persulfide intermediate. Positions 311 to 312 are interaction with tRNA; sequence RY.

Belongs to the MnmA/TRMU family.

The protein localises to the cytoplasm. It catalyses the reaction S-sulfanyl-L-cysteinyl-[protein] + uridine(34) in tRNA + AH2 + ATP = 2-thiouridine(34) in tRNA + L-cysteinyl-[protein] + A + AMP + diphosphate + H(+). Catalyzes the 2-thiolation of uridine at the wobble position (U34) of tRNA, leading to the formation of s(2)U34. The chain is tRNA-specific 2-thiouridylase MnmA from Lysinibacillus sphaericus (strain C3-41).